The primary structure comprises 302 residues: ATP synthase gamma chain (302 aa).

The protein belongs to the ATPase gamma chain family. F-type ATPases have 2 components, CF(1) - the catalytic core - and CF(0) - the membrane proton channel. CF(1) has five subunits: alpha(3), beta(3), gamma(1), delta(1), epsilon(1). CF(0) has three main subunits: a, b and c.

Its subcellular location is the cell membrane. In terms of biological role, produces ATP from ADP in the presence of a proton gradient across the membrane. The gamma chain is believed to be important in regulating ATPase activity and the flow of protons through the CF(0) complex. This is ATP synthase gamma chain from Leuconostoc citreum (strain KM20).